We begin with the raw amino-acid sequence, 385 residues long: UPF0284 protein PMM0439 (385 aa).

It belongs to the UPF0284 family.

This chain is UPF0284 protein PMM0439, found in Prochlorococcus marinus subsp. pastoris (strain CCMP1986 / NIES-2087 / MED4).